A 192-amino-acid polypeptide reads, in one-letter code: Thioredoxin-like 3-2, chloroplastic (192 aa).

The transit peptide at 1 to 55 directs the protein to the chloroplast; that stretch reads MSEIVNLSSSLRSLNPKISPLVPPYRQTSSSFSRPRNFKYHSFTDKICLAAERIR. A Thioredoxin domain is found at 66-191; sequence LQELDDSPVS…VREMIENDSI (126 aa). Catalysis depends on nucleophile residues Cys110 and Cys113. Residues Cys110 and Cys113 are joined by a disulfide bond.

The protein belongs to the thioredoxin family.

It localises to the plastid. The protein resides in the chloroplast stroma. Probable thiol-disulfide oxidoreductase that may participate in various redox reactions. The sequence is that of Thioredoxin-like 3-2, chloroplastic (WCRKC2) from Arabidopsis thaliana (Mouse-ear cress).